The following is an 81-amino-acid chain: MAHAVKIYDTCIGCTQCVRACPTDVLEMIPWDGCKANQIASAPRTEDCVGCKRCESRCPTDFLSVRVYLGNETTRSMGLSY.

4Fe-4S ferredoxin-type domains follow at residues 2 to 31 (AHAV…MIPW) and 39 to 68 (IASA…VRVY). [4Fe-4S] cluster is bound by residues C11, C14, C17, C21, C48, C51, C54, and C58.

As to quaternary structure, the eukaryotic PSI reaction center is composed of at least 11 subunits. It depends on [4Fe-4S] cluster as a cofactor.

The protein resides in the plastid. The protein localises to the chloroplast thylakoid membrane. The enzyme catalyses reduced [plastocyanin] + hnu + oxidized [2Fe-2S]-[ferredoxin] = oxidized [plastocyanin] + reduced [2Fe-2S]-[ferredoxin]. Apoprotein for the two 4Fe-4S centers FA and FB of photosystem I (PSI); essential for photochemical activity. FB is the terminal electron acceptor of PSI, donating electrons to ferredoxin. The C-terminus interacts with PsaA/B/D and helps assemble the protein into the PSI complex. Required for binding of PsaD and PsaE to PSI. PSI is a plastocyanin-ferredoxin oxidoreductase, converting photonic excitation into a charge separation, which transfers an electron from the donor P700 chlorophyll pair to the spectroscopically characterized acceptors A0, A1, FX, FA and FB in turn. This is Photosystem I iron-sulfur center from Marchantia polymorpha (Common liverwort).